The sequence spans 225 residues: Uracil phosphoribosyltransferase (225 aa).

36-40 (KGLVR) is a GTP binding site. 5-phospho-alpha-D-ribose 1-diphosphate contacts are provided by residues arginine 86, arginine 111, and 145–153 (DPMLATGST). Residues isoleucine 210 and 215-217 (GDA) contribute to the uracil site. Position 216 (aspartate 216) interacts with 5-phospho-alpha-D-ribose 1-diphosphate.

The protein belongs to the UPRTase family. Mg(2+) serves as cofactor.

It carries out the reaction UMP + diphosphate = 5-phospho-alpha-D-ribose 1-diphosphate + uracil. The protein operates within pyrimidine metabolism; UMP biosynthesis via salvage pathway; UMP from uracil: step 1/1. With respect to regulation, allosterically activated by GTP. Catalyzes the conversion of uracil and 5-phospho-alpha-D-ribose 1-diphosphate (PRPP) to UMP and diphosphate. This Haloarcula marismortui (strain ATCC 43049 / DSM 3752 / JCM 8966 / VKM B-1809) (Halobacterium marismortui) protein is Uracil phosphoribosyltransferase.